Consider the following 210-residue polypeptide: Helix-loop-helix protein 26 (210 aa).

Over residues 1–15 (MSSSPTSSSSGSPSS) the composition is skewed to low complexity. Positions 1–33 (MSSSPTSSSSGSPSSHGHRSETEKQRRDDTNDL) are disordered. The bHLH domain maps to 14–65 (SSHGHRSETEKQRRDDTNDLLNEFKKIVQKSESEKLSKEEVLFRIVKLLSGI). The segment covering 18 to 33 (HRSETEKQRRDDTNDL) has biased composition (basic and acidic residues).

As to quaternary structure, homodimer; binds to DNA as a homodimer. As to expression, expressed in intestinal cells (at protein level).

It is found in the nucleus. Functionally, as a homodimer binds DNA via the E-box sequence 5'-CACGTG-3'. Represses lag-2 transcription during embryogenesis via Notch signaling, in an unc-37-dependent manner. Also represses tbx-37 independent of Notch signaling. In the intestine, plays a role in probiotic-mediated protection against infections by pathogens such as S.enterica. This is most likely by positively regulating the expression of genes such as bar-1 upon exposure to probiotic bacteria such as the E.faecium. This is Helix-loop-helix protein 26 from Caenorhabditis elegans.